We begin with the raw amino-acid sequence, 562 residues long: Dihydroxy-acid dehydratase 2 (562 aa).

Cysteine 50 contacts [2Fe-2S] cluster. Aspartate 82 is a binding site for Mg(2+). Cysteine 123 serves as a coordination point for [2Fe-2S] cluster. Residues aspartate 124, lysine 125, and glutamate 447 each contribute to the Mg(2+) site. Residue lysine 125 is modified to N6-carboxylysine. The active-site Proton acceptor is serine 473.

This sequence belongs to the IlvD/Edd family. In terms of assembly, homodimer. [2Fe-2S] cluster is required as a cofactor. Mg(2+) serves as cofactor.

The enzyme catalyses (2R)-2,3-dihydroxy-3-methylbutanoate = 3-methyl-2-oxobutanoate + H2O. It catalyses the reaction (2R,3R)-2,3-dihydroxy-3-methylpentanoate = (S)-3-methyl-2-oxopentanoate + H2O. It participates in amino-acid biosynthesis; L-isoleucine biosynthesis; L-isoleucine from 2-oxobutanoate: step 3/4. The protein operates within amino-acid biosynthesis; L-valine biosynthesis; L-valine from pyruvate: step 3/4. In terms of biological role, functions in the biosynthesis of branched-chain amino acids. Catalyzes the dehydration of (2R,3R)-2,3-dihydroxy-3-methylpentanoate (2,3-dihydroxy-3-methylvalerate) into 2-oxo-3-methylpentanoate (2-oxo-3-methylvalerate) and of (2R)-2,3-dihydroxy-3-methylbutanoate (2,3-dihydroxyisovalerate) into 2-oxo-3-methylbutanoate (2-oxoisovalerate), the penultimate precursor to L-isoleucine and L-valine, respectively. The polypeptide is Dihydroxy-acid dehydratase 2 (Bordetella pertussis (strain Tohama I / ATCC BAA-589 / NCTC 13251)).